Here is a 1210-residue protein sequence, read N- to C-terminus: Homeodomain-interacting protein kinase 1 (1210 aa).

Lys-25 participates in a covalent cross-link: Glycyl lysine isopeptide (Lys-Gly) (interchain with G-Cter in SUMO); alternate. Lys-25 participates in a covalent cross-link: Glycyl lysine isopeptide (Lys-Gly) (interchain with G-Cter in SUMO2); alternate. Glycyl lysine isopeptide (Lys-Gly) (interchain with G-Cter in SUMO2) cross-links involve residues Lys-120 and Lys-124. The Protein kinase domain maps to 190-518 (YEVLEFLGRG…PLKTLNHQFV (329 aa)). ATP is bound by residues 196–204 (LGRGTFGQV) and Lys-219. Asp-315 (proton acceptor) is an active-site residue. A disordered region spans residues 835–856 (QQQSSSLPSKKNKQSAPVSSKS). The Nuclear localization signal 1 (NLS1) motif lies at 844 to 847 (KKNK). Residue Ser-872 is modified to Phosphoserine. Positions 885-1093 (PVQDQHQPII…FQHGSPLHST (209 aa)) are interaction with TP53. The tract at residues 891 to 998 (QPIIIPDTPS…PLKTQLGDCT (108 aa)) is required for localization to nuclear speckles. The interval 902–926 (PVSVITIRSDTDEEEDNKYKPNSSS) is SUMO interaction motifs (SIM); required for nuclear localization and kinase activity. The segment at 938–981 (TVNDSPDSDSSLSSPHPTDTLSALRGNSGTLLEGPGRPAADGIG) is disordered. The span at 941-959 (DSPDSDSSLSSPHPTDTLS) shows a compositional bias: low complexity. Lys-991 is covalently cross-linked (Glycyl lysine isopeptide (Lys-Gly) (interchain with G-Cter in SUMO2)). 2 disordered regions span residues 1046 to 1069 (LSQN…APRR) and 1084 to 1104 (FQHG…APAH). 2 stretches are compositionally biased toward low complexity: residues 1047–1063 (SQNQ…ERSS) and 1095–1104 (HPHLAPAPAH). Position 1200 is a phosphoserine (Ser-1200). Residue Lys-1203 forms a Glycyl lysine isopeptide (Lys-Gly) (interchain with G-Cter in SUMO) linkage.

The protein belongs to the protein kinase superfamily. CMGC Ser/Thr protein kinase family. HIPK subfamily. Interacts with Nkx1-2, Nkx2-5, MYB, PARK7, DAXX and p53/TP53. Part of a cytoplasmic complex made of HIPK1, DAB2IP and MAP3K5 in response to TNF. This complex formation promotes MAP3K5-JNK activation and subsequent apoptosis. Post-translationally, phosphorylated and activated by JNK1. Autophosphorylated. In terms of processing, sumoylated. When conjugated it is directed to nuclear speckles. SENP1-mediated desumoylation is mediated by TNF in response to stress stimuli, triggering transient translocation from nucleus to cytoplasm. In terms of tissue distribution, ubiquitously expressed, with high levels in reproductive tissues. Expressed in the epithelial layer of mammary gland, uterus and epididymis, in the corpus luteum, and in post-meiotic round spermatids.

The protein localises to the nucleus. It localises to the cytoplasm. The protein resides in the nucleus speckle. The enzyme catalyses L-seryl-[protein] + ATP = O-phospho-L-seryl-[protein] + ADP + H(+). It catalyses the reaction L-threonyl-[protein] + ATP = O-phospho-L-threonyl-[protein] + ADP + H(+). In terms of biological role, serine/threonine-protein kinase involved in transcription regulation and TNF-mediated cellular apoptosis. Plays a role as a corepressor for homeodomain transcription factors. Phosphorylates DAXX and MYB. Phosphorylates DAXX in response to stress, and mediates its translocation from the nucleus to the cytoplasm. Inactivates MYB transcription factor activity by phosphorylation. Prevents MAP3K5-JNK activation in the absence of TNF. TNF triggers its translocation to the cytoplasm in response to stress stimuli, thus activating nuclear MAP3K5-JNK by derepression and promoting apoptosis. May be involved in anti-oxidative stress responses. Involved in the regulation of eye size, lens formation and retinal lamination during late embryogenesis. Promotes angiogenesis and to be involved in erythroid differentiation. May be involved in malignant squamous cell tumor formation. Phosphorylates PAGE4 at 'Thr-51' which is critical for the ability of PAGE4 to potentiate the transcriptional activator activity of JUN. In Mus musculus (Mouse), this protein is Homeodomain-interacting protein kinase 1 (Hipk1).